The chain runs to 118 residues: Basic phospholipase A2 nigroxin A (118 aa).

Disulfide bonds link Cys-11-Cys-70, Cys-25-Cys-117, Cys-27-Cys-43, Cys-42-Cys-98, Cys-49-Cys-91, Cys-59-Cys-84, and Cys-77-Cys-89. Tyr-26, Gly-28, and Gly-30 together coordinate Ca(2+). His-46 is a catalytic residue. Asp-47 is a Ca(2+) binding site. Asp-92 is an active-site residue.

The protein belongs to the phospholipase A2 family. Group I subfamily. D49 sub-subfamily. It depends on Ca(2+) as a cofactor. In terms of tissue distribution, expressed by the venom gland.

It is found in the secreted. It catalyses the reaction a 1,2-diacyl-sn-glycero-3-phosphocholine + H2O = a 1-acyl-sn-glycero-3-phosphocholine + a fatty acid + H(+). Functionally, snake venom phospholipase A2 (PLA2) that has only a weak enzymatic activity. It has a myotoxic activity in vivo (dystrophic effect). PLA2 catalyzes the calcium-dependent hydrolysis of the 2-acyl groups in 3-sn-phosphoglycerides. The sequence is that of Basic phospholipase A2 nigroxin A from Micrurus nigrocinctus (Central American coral snake).